Reading from the N-terminus, the 912-residue chain is Cadherin-2 (912 aa).

The signal sequence occupies residues 1 to 28 (MCRIAGTPPRILPPLALMLLAALQQAPI). Positions 29 to 164 (KATCEDMLCK…DSSHLKRQKR (136 aa)) are excised as a propeptide. 5 consecutive Cadherin domains span residues 165–272 (DWVI…RPEF), 273–387 (LHQV…PPEF), 388–502 (TAMT…SPYF), 503–609 (VPNP…DNAP), and 610–720 (QVNP…DVDR). The Extracellular segment spans residues 165–729 (DWVIPPINLP…RIVGAGLGTG (565 aa)). Ca(2+) is bound by residues Glu175, Asp231, Glu233, Asp264, Met265, Asn266, Asp267, and Asn268. Asn278 carries N-linked (GlcNAc...) asparagine glycosylation. Asp298, Asp300, and Asn306 together coordinate Ca(2+). Asn330 is a glycosylation site (N-linked (GlcNAc...) asparagine). Ca(2+) is bound at residue Asp358. Asn407, Asn578, Asn628, and Asn657 each carry an N-linked (GlcNAc...) asparagine glycan. The helical transmembrane segment at 730 to 752 (AIIAILLCIIILLILVLMFVVWM) threads the bilayer. Residues 753–912 (KRRDKERQAK…LADMYGGGDD (160 aa)) lie on the Cytoplasmic side of the membrane. Low complexity predominate over residues 869 to 886 (SGSTAGSLSSLNSSSSGG). Residues 869 to 890 (SGSTAGSLSSLNSSSSGGEQDY) are disordered.

In terms of assembly, homodimer (via extracellular region). Can also form heterodimers with other cadherins (via extracellular region). Dimerization occurs in trans, i.e. with a cadherin chain from another cell. Interacts with CTNNA2. As to expression, expressed at intercalated disks in the heart (at protein level).

Its subcellular location is the cell membrane. It localises to the sarcolemma. The protein localises to the cell junction. The protein resides in the cell surface. It is found in the desmosome. Its subcellular location is the adherens junction. In terms of biological role, calcium-dependent cell adhesion protein; preferentially mediates homotypic cell-cell adhesion. Cadherins may thus contribute to the sorting of heterogeneous cell types, and thereby play an important role during embryonic development. Required for proper neurite branching, and pre- and postsynaptic organization. This chain is Cadherin-2 (CDH2), found in Gallus gallus (Chicken).